We begin with the raw amino-acid sequence, 202 residues long: Histone chaperone ASF1B (202 aa).

Positions 1 to 156 are interaction with histone H3 and CHAF1B; sequence MAKVSVLNVA…TRFHINWDNN (156 aa). Position 198 is a phosphoserine; by TLK2 (Ser198).

This sequence belongs to the ASF1 family. In terms of assembly, interacts with histone H3 (via C-terminus), including histone H3.1, H3.2 and H3.3, and histone H4; the interaction with H3 is direct. Interacts with the CHAF1A, CHAF1B and RBBP4 subunits of the CAF-1 complex. Interacts with HAT1, NASP and TAF1. Found in a soluble complex with NASP and histones H3 and H4; the interaction with NASP is probably indirect and mediated by H3-H4. Interacts with CDAN1. Found in a cytosolic complex with CDAN1, ASF1A, IPO4 and histones H3.1 and H4. Interacts with CREBBP. Phosphorylated by TLK1 and TLK2.

Its subcellular location is the nucleus. It localises to the cytoplasm. The protein localises to the cytosol. Histone chaperone that facilitates histone deposition and histone exchange and removal during nucleosome assembly and disassembly. Cooperates with chromatin assembly factor 1 (CAF-1) to promote replication-dependent chromatin assembly. Also involved in the nuclear import of the histone H3-H4 dimer together with importin-4 (IPO4): specifically recognizes and binds newly synthesized histones with the monomethylation of H3 'Lys-9' (H3K9me1) and diacetylation at 'Lys-5' and 'Lys-12' of H4 (H4K5ac and H4K12ac) marks in the cytosol. Does not participate in replication-independent nucleosome deposition which is mediated by ASF1A and HIRA. Required for gonad development. The protein is Histone chaperone ASF1B (ASF1B) of Bos taurus (Bovine).